We begin with the raw amino-acid sequence, 359 residues long: Mandelate racemase (359 aa).

Residue lysine 166 is the Proton acceptor; specific for S-mandelate of the active site. Mg(2+) is bound by residues aspartate 195, glutamate 221, and glutamate 247. Residue histidine 297 is the Proton acceptor; specific for R-mandelate of the active site. Residue glutamate 317 coordinates substrate.

This sequence belongs to the mandelate racemase/muconate lactonizing enzyme family. Homooctamer. Requires Mg(2+) as cofactor.

The catalysed reaction is (S)-mandelate = (R)-mandelate. It participates in aromatic compound metabolism; (R)-mandelate degradation; benzoate from (R)-mandelate: step 1/4. In Pseudomonas putida (Arthrobacter siderocapsulatus), this protein is Mandelate racemase (mdlA).